The sequence spans 295 residues: ATP synthase gamma chain (295 aa).

The protein belongs to the ATPase gamma chain family. As to quaternary structure, F-type ATPases have 2 components, CF(1) - the catalytic core - and CF(0) - the membrane proton channel. CF(1) has five subunits: alpha(3), beta(3), gamma(1), delta(1), epsilon(1). CF(0) has three main subunits: a, b and c.

It localises to the cell inner membrane. Functionally, produces ATP from ADP in the presence of a proton gradient across the membrane. The gamma chain is believed to be important in regulating ATPase activity and the flow of protons through the CF(0) complex. The polypeptide is ATP synthase gamma chain (Sulfurovum sp. (strain NBC37-1)).